The primary structure comprises 129 residues: DNA-directed RNA polymerase II subunit RPB9 (129 aa).

8 residues coordinate Zn(2+): C21, C24, C43, C46, C90, C93, C118, and C123. A C4-type zinc finger spans residues C21–C46. A TFIIS-type zinc finger spans residues E86 to T128.

This sequence belongs to the archaeal RpoM/eukaryotic RPA12/RPB9/RPC11 RNA polymerase family. As to quaternary structure, component of the RNA polymerase II (Pol II) complex consisting of 12 subunits.

It is found in the nucleus. The protein localises to the nucleolus. Its function is as follows. DNA-dependent RNA polymerase catalyzes the transcription of DNA into RNA using the four ribonucleoside triphosphates as substrates. Component of RNA polymerase II which synthesizes mRNA precursors and many functional non-coding RNAs. Pol II is the central component of the basal RNA polymerase II transcription machinery. It is composed of mobile elements that move relative to each other. RPB9 is part of the upper jaw surrounding the central large cleft and thought to grab the incoming DNA template. This Drosophila melanogaster (Fruit fly) protein is DNA-directed RNA polymerase II subunit RPB9.